Here is a 346-residue protein sequence, read N- to C-terminus: Methylthioribose-1-phosphate isomerase (346 aa).

Substrate is bound by residues 54–56, Arg91, and Gln192; that span reads RGA. The active-site Proton donor is the Asp233. A substrate-binding site is contributed by 243–244; it reads NK.

This sequence belongs to the eIF-2B alpha/beta/delta subunits family. MtnA subfamily.

The catalysed reaction is 5-(methylsulfanyl)-alpha-D-ribose 1-phosphate = 5-(methylsulfanyl)-D-ribulose 1-phosphate. The protein operates within amino-acid biosynthesis; L-methionine biosynthesis via salvage pathway; L-methionine from S-methyl-5-thio-alpha-D-ribose 1-phosphate: step 1/6. Catalyzes the interconversion of methylthioribose-1-phosphate (MTR-1-P) into methylthioribulose-1-phosphate (MTRu-1-P). This Yersinia enterocolitica serotype O:8 / biotype 1B (strain NCTC 13174 / 8081) protein is Methylthioribose-1-phosphate isomerase.